Reading from the N-terminus, the 430-residue chain is Adenylosuccinate synthetase (430 aa).

GTP-binding positions include 13 to 19 (GDEGKGK) and 41 to 43 (GHT). The active-site Proton acceptor is Asp-14. Positions 14 and 41 each coordinate Mg(2+). Residues 14–17 (DEGK), 39–42 (NAGH), Thr-130, Arg-144, Gln-225, Thr-240, and Arg-304 each bind IMP. His-42 serves as the catalytic Proton donor. 300 to 306 (ATTGRAR) serves as a coordination point for substrate. GTP is bound by residues Arg-306, 332-334 (KLD), and 414-416 (STG).

The protein belongs to the adenylosuccinate synthetase family. Homodimer. Requires Mg(2+) as cofactor.

It is found in the cytoplasm. The catalysed reaction is IMP + L-aspartate + GTP = N(6)-(1,2-dicarboxyethyl)-AMP + GDP + phosphate + 2 H(+). The protein operates within purine metabolism; AMP biosynthesis via de novo pathway; AMP from IMP: step 1/2. Its function is as follows. Plays an important role in the de novo pathway of purine nucleotide biosynthesis. Catalyzes the first committed step in the biosynthesis of AMP from IMP. This Pseudomonas syringae pv. tomato (strain ATCC BAA-871 / DC3000) protein is Adenylosuccinate synthetase.